The chain runs to 183 residues: Oligoribonuclease (183 aa).

Residues 8 to 171 (LIWLDLEMTG…QDIRDSIEEL (164 aa)) form the Exonuclease domain. Residue Y129 is part of the active site.

It belongs to the oligoribonuclease family.

Its subcellular location is the cytoplasm. 3'-to-5' exoribonuclease specific for small oligoribonucleotides. The protein is Oligoribonuclease of Coxiella burnetii (strain RSA 493 / Nine Mile phase I).